The sequence spans 232 residues: Orotidine 5'-phosphate decarboxylase (232 aa).

Residues aspartate 14, lysine 36, 63–72 (DLKFHDIPNT), threonine 122, arginine 183, glutamine 192, glycine 212, and arginine 213 contribute to the substrate site. Lysine 65 acts as the Proton donor in catalysis.

This sequence belongs to the OMP decarboxylase family. Type 1 subfamily. Homodimer.

The catalysed reaction is orotidine 5'-phosphate + H(+) = UMP + CO2. Its pathway is pyrimidine metabolism; UMP biosynthesis via de novo pathway; UMP from orotate: step 2/2. Its function is as follows. Catalyzes the decarboxylation of orotidine 5'-monophosphate (OMP) to uridine 5'-monophosphate (UMP). The chain is Orotidine 5'-phosphate decarboxylase from Psychrobacter arcticus (strain DSM 17307 / VKM B-2377 / 273-4).